Here is a 752-residue protein sequence, read N- to C-terminus: Cation-transporting P-type ATPase B (752 aa).

The HMA domain occupies 15–78 (RRIRLDVSGM…VVEKAGYHAA (64 aa)). Residues Cys-26 and Cys-29 each coordinate a metal cation. Helical transmembrane passes span 105–125 (LLVA…FAIV), 132–152 (GWGY…AWPF), 167–187 (METL…SSVF), 201–221 (AILN…VFVL), 361–381 (IAGV…AAWL), and 390–410 (AFSV…GLAT). Asp-446 (4-aspartylphosphate intermediate) is an active-site residue. A helical transmembrane segment spans residues 714–734 (AIPIAAAGLLNPLIAGAAMAF).

This sequence belongs to the cation transport ATPase (P-type) (TC 3.A.3) family. Type IB subfamily.

Its subcellular location is the cell membrane. It carries out the reaction ATP + H2O = ADP + phosphate + H(+). The sequence is that of Cation-transporting P-type ATPase B (ctpB) from Mycobacterium bovis (strain ATCC BAA-935 / AF2122/97).